The sequence spans 423 residues: Imidazolonepropionase (423 aa).

The Fe(3+) site is built by His-78 and His-80. His-78 and His-80 together coordinate Zn(2+). Residues Arg-87, Tyr-150, and His-183 each coordinate 4-imidazolone-5-propanoate. Tyr-150 contributes to the N-formimidoyl-L-glutamate binding site. His-247 provides a ligand contact to Fe(3+). His-247 contributes to the Zn(2+) binding site. Glu-250 serves as a coordination point for 4-imidazolone-5-propanoate. Residue Asp-322 participates in Fe(3+) binding. A Zn(2+)-binding site is contributed by Asp-322. The N-formimidoyl-L-glutamate site is built by Asn-324 and Gly-326. Position 327 (Ser-327) interacts with 4-imidazolone-5-propanoate.

Belongs to the metallo-dependent hydrolases superfamily. HutI family. It depends on Zn(2+) as a cofactor. The cofactor is Fe(3+).

It is found in the cytoplasm. It carries out the reaction 4-imidazolone-5-propanoate + H2O = N-formimidoyl-L-glutamate. It functions in the pathway amino-acid degradation; L-histidine degradation into L-glutamate; N-formimidoyl-L-glutamate from L-histidine: step 3/3. Functionally, catalyzes the hydrolytic cleavage of the carbon-nitrogen bond in imidazolone-5-propanoate to yield N-formimidoyl-L-glutamate. It is the third step in the universal histidine degradation pathway. This Bacillus cereus (strain B4264) protein is Imidazolonepropionase.